A 481-amino-acid chain; its full sequence is Adenosylhomocysteinase (481 aa).

Substrate-binding residues include T65, D140, and E200. Position 201–203 (201–203 (TTT)) interacts with NAD(+). Residues K230 and D234 each coordinate substrate. NAD(+) is bound by residues N235, 264 to 269 (GYGDVG), E287, N322, 343 to 345 (IGH), and N393.

The protein belongs to the adenosylhomocysteinase family. The cofactor is NAD(+).

It localises to the cytoplasm. The enzyme catalyses S-adenosyl-L-homocysteine + H2O = L-homocysteine + adenosine. It participates in amino-acid biosynthesis; L-homocysteine biosynthesis; L-homocysteine from S-adenosyl-L-homocysteine: step 1/1. May play a key role in the regulation of the intracellular concentration of adenosylhomocysteine. In Polynucleobacter necessarius subsp. necessarius (strain STIR1), this protein is Adenosylhomocysteinase.